The sequence spans 323 residues: Transaldolase (323 aa).

Lys133 serves as the catalytic Schiff-base intermediate with substrate.

Belongs to the transaldolase family. Type 1 subfamily. Monomer.

The enzyme catalyses D-sedoheptulose 7-phosphate + D-glyceraldehyde 3-phosphate = D-erythrose 4-phosphate + beta-D-fructose 6-phosphate. Its pathway is carbohydrate degradation; pentose phosphate pathway; D-glyceraldehyde 3-phosphate and beta-D-fructose 6-phosphate from D-ribose 5-phosphate and D-xylulose 5-phosphate (non-oxidative stage): step 2/3. Functionally, transaldolase important for the balance of metabolites in the pentose-phosphate pathway. Involved in xylose fermentation to ethanol. The polypeptide is Transaldolase (Fusarium oxysporum f. sp. lycopersici (strain 4287 / CBS 123668 / FGSC 9935 / NRRL 34936) (Fusarium vascular wilt of tomato)).